We begin with the raw amino-acid sequence, 193 residues long: Ribonuclease HII (193 aa).

The region spanning 3–192 is the RNase H type-2 domain; sequence SLVAGIDEVG…VRAVIDRSSA (190 aa). D9, E10, and D101 together coordinate a divalent metal cation.

Belongs to the RNase HII family. The cofactor is Mn(2+). Requires Mg(2+) as cofactor.

The protein resides in the cytoplasm. It catalyses the reaction Endonucleolytic cleavage to 5'-phosphomonoester.. Functionally, endonuclease that specifically degrades the RNA of RNA-DNA hybrids. In Methylococcus capsulatus (strain ATCC 33009 / NCIMB 11132 / Bath), this protein is Ribonuclease HII.